A 125-amino-acid chain; its full sequence is MGFWKFPPFLVLSILVLYQAGMFHAAPFRSVFDGRFDPATLDEEESRLLLAAMVNDYEQMRARESEKAQKTEGSRIQKRACNTATCMTHRLAGWLSRSGSMVRSNLLPTKMGFKIFNGPRRNSWF.

An N-terminal signal peptide occupies residues 1–25 (MGFWKFPPFLVLSILVLYQAGMFHA). A propeptide spanning residues 26–77 (APFRSVFDGRFDPATLDEEESRLLLAAMVNDYEQMRARESEKAQKTEGSRIQ) is cleaved from the precursor. A disulfide bridge connects residues C81 and C86.

The protein belongs to the calcitonin family.

It localises to the secreted. In terms of biological role, stimulates cAMP production in porcine kidney cell line LLC-PK1 via the calcitonin receptor (CT) but not via the CT-like (CL) receptor. The chain is Calcitonin receptor-stimulating peptide 1 (CRSP1) from Bos taurus (Bovine).